A 211-amino-acid polypeptide reads, in one-letter code: RILP-like protein 2 (211 aa).

Residues 1–32 (MEEPPVREEEEEEGEEDEERDEVGPEGALGKS) form a disordered region. The segment covering 8–21 (EEEEEEGEEDEERD) has biased composition (acidic residues). An RH1 domain is found at 24–106 (GPEGALGKSP…RKEVEGLRRQ (83 aa)). The stretch at 70-164 (RVLEMLEALV…VQEELQCYKS (95 aa)) forms a coiled coil. Phosphoserine is present on Ser107. One can recognise an RH2 domain in the interval 130-201 (RPRFTLQELR…NKEEKTIIKK (72 aa)). The tract at residues 166-190 (LIPPREGPGGRREKDAVVTSAKNAG) is disordered.

Belongs to the RILPL family. As to quaternary structure, homodimer. Interacts with RAC1. Interacts (via N-terminus) with MYO5A, the interaction is required for its role in dendrite formation. Interacts with RAB8A; interaction is dependent on the phosphorylation of RAB8A on 'Thr-72'. Interacts with RAB10 and RAB12; interaction is dependent on the phosphorylation of 'Thr-73' on RAB10 and 'Ser-105' on RAB12. As to expression, widely expressed. Expressed at higher level in lung.

It is found in the cytoplasm. It localises to the cytosol. The protein localises to the cytoskeleton. Its subcellular location is the microtubule organizing center. The protein resides in the centrosome. It is found in the cell projection. It localises to the cilium. Functionally, involved in cell shape and neuronal morphogenesis, positively regulating the establishment and maintenance of dendritic spines. Plays a role in cellular protein transport, including protein transport away from primary cilia. May function via activation of RAC1 and PAK1. The sequence is that of RILP-like protein 2 (RILPL2) from Homo sapiens (Human).